The sequence spans 749 residues: Subtilisin-like protease SBT4.14 (749 aa).

Positions Met1–Ser28 are cleaved as a signal peptide. Residues Ala29–His115 constitute a propeptide, activation peptide. In terms of domain architecture, Inhibitor I9 spans Tyr38–His115. Residues Ser119–Ala595 form the Peptidase S8 domain. Asp145 (charge relay system) is an active-site residue. Asn176 is a glycosylation site (N-linked (GlcNAc...) asparagine). His210 serves as the catalytic Charge relay system. Asn225, Asn233, Asn446, and Asn458 each carry an N-linked (GlcNAc...) asparagine glycan. Residue Ser536 is the Charge relay system of the active site. A glycan (N-linked (GlcNAc...) asparagine) is linked at Asn618.

The protein belongs to the peptidase S8 family. In terms of processing, the C-terminal propeptide is autocleaved. As to expression, expressed only in roots, particularly in xylem.

This is Subtilisin-like protease SBT4.14 from Arabidopsis thaliana (Mouse-ear cress).